The following is a 577-amino-acid chain: Aspartate--tRNA ligase (577 aa).

An L-aspartate-binding site is contributed by Glu169. The segment at 193–196 (QLYK) is aspartate. Arg215 serves as a coordination point for L-aspartate. ATP-binding positions include 215–217 (RDE) and Gln224. An L-aspartate-binding site is contributed by His440. ATP is bound at residue Glu474. Arg481 contacts L-aspartate. Position 526–529 (526–529 (GIDR)) interacts with ATP.

This sequence belongs to the class-II aminoacyl-tRNA synthetase family. Type 1 subfamily. As to quaternary structure, homodimer.

It localises to the cytoplasm. The enzyme catalyses tRNA(Asp) + L-aspartate + ATP = L-aspartyl-tRNA(Asp) + AMP + diphosphate. In terms of biological role, catalyzes the attachment of L-aspartate to tRNA(Asp) in a two-step reaction: L-aspartate is first activated by ATP to form Asp-AMP and then transferred to the acceptor end of tRNA(Asp). The chain is Aspartate--tRNA ligase from Mesoplasma florum (strain ATCC 33453 / NBRC 100688 / NCTC 11704 / L1) (Acholeplasma florum).